A 248-amino-acid chain; its full sequence is Agamous-like MADS-box protein AGL1 (248 aa).

The region spanning 18 to 72 (RGKIEIKRIENTTNRQVTFCKRRNGLLKKAYELSVLCDAEVALVIFSTRGRLYEY) is the MADS-box domain. In terms of domain architecture, K-box spans 102 to 192 (TQYYQQEASK…RAKIAEGARL (91 aa)).

In terms of assembly, interacts with AGL15 and AGL16.

It localises to the nucleus. In terms of biological role, probable transcription factor. Interacts genetically with TT16/AGL32 in a partially antagonistic manner during flower development. Is essential for the coordination of cell divisions in ovule, seed coat development and endosperm formation. This chain is Agamous-like MADS-box protein AGL1 (AGL1), found in Arabidopsis thaliana (Mouse-ear cress).